A 176-amino-acid polypeptide reads, in one-letter code: Insulin-like growth factor 1 (176 aa).

The tract at residues 45 to 73 (GPETLCGAELVDTLQFVCGERGFYFSKPT) is b. 3 cysteine pairs are disulfide-bonded: Cys-50–Cys-92, Cys-62–Cys-105, and Cys-91–Cys-96. The interval 74–85 (GYGPSSRRSHNR) is c. The interval 86–106 (GIVDECCFQSCELRRLEMYCA) is a. The segment at 107-114 (PVKSGKAA) is d. Residues 115 to 176 (RSVRAQRHTD…GNTGGRNYRM (62 aa)) constitute a propeptide, e peptide. Residues 115-176 (RSVRAQRHTD…GNTGGRNYRM (62 aa)) are disordered. The span at 140-161 (RGTERRTAQHPDKTKPKKEVHQ) shows a compositional bias: basic and acidic residues.

Belongs to the insulin family.

It localises to the secreted. Its function is as follows. The insulin-like growth factors, isolated from plasma, are structurally and functionally related to insulin but have a much higher growth-promoting activity. Acts as a ligand for IGF1R. Binds to the alpha subunit of IGF1R, leading to the activation of the intrinsic tyrosine kinase activity which autophosphorylates tyrosine residues in the beta subunit thus initiatiating a cascade of down-stream signaling events leading to activation of the PI3K-AKT/PKB and the Ras-MAPK pathways. Binds to integrins. Its binding to integrins and subsequent ternary complex formation with integrins and IGFR1 are essential for IGF1 signaling. The chain is Insulin-like growth factor 1 from Oncorhynchus mykiss (Rainbow trout).